A 255-amino-acid chain; its full sequence is Hemin import ATP-binding protein HmuV (255 aa).

An ABC transporter domain is found at 2–238 (LRVENLSIRR…EPLRAVFGLE (237 aa)). 34 to 41 (GPNGAGKS) provides a ligand contact to ATP.

Belongs to the ABC transporter superfamily. Heme (hemin) importer (TC 3.A.1.14.5) family. The complex is composed of two ATP-binding proteins (HmuV), two transmembrane proteins (HmuU) and a solute-binding protein (HmuT).

The protein resides in the cell inner membrane. Its function is as follows. Part of the ABC transporter complex HmuTUV involved in hemin import. Responsible for energy coupling to the transport system. This is Hemin import ATP-binding protein HmuV from Pseudomonas aeruginosa (strain ATCC 15692 / DSM 22644 / CIP 104116 / JCM 14847 / LMG 12228 / 1C / PRS 101 / PAO1).